Here is a 190-residue protein sequence, read N- to C-terminus: Holliday junction branch migration complex subunit RuvA (190 aa).

Residues 1–64 (MIGRITGTLI…EDAHLLYGFG (64 aa)) are domain I. Residues 65–137 (TASERAAFRE…MRGKLGADIG (73 aa)) form a domain II region. A flexible linker region spans residues 137–141 (GATPH). Positions 142 to 190 (AVPDSQSDILNALLALGYSEKESLAALKTLPEGLGVSDGIRQALKALAR) are domain III.

The protein belongs to the RuvA family. As to quaternary structure, homotetramer. Forms an RuvA(8)-RuvB(12)-Holliday junction (HJ) complex. HJ DNA is sandwiched between 2 RuvA tetramers; dsDNA enters through RuvA and exits via RuvB. An RuvB hexamer assembles on each DNA strand where it exits the tetramer. Each RuvB hexamer is contacted by two RuvA subunits (via domain III) on 2 adjacent RuvB subunits; this complex drives branch migration. In the full resolvosome a probable DNA-RuvA(4)-RuvB(12)-RuvC(2) complex forms which resolves the HJ.

The protein localises to the cytoplasm. The RuvA-RuvB-RuvC complex processes Holliday junction (HJ) DNA during genetic recombination and DNA repair, while the RuvA-RuvB complex plays an important role in the rescue of blocked DNA replication forks via replication fork reversal (RFR). RuvA specifically binds to HJ cruciform DNA, conferring on it an open structure. The RuvB hexamer acts as an ATP-dependent pump, pulling dsDNA into and through the RuvAB complex. HJ branch migration allows RuvC to scan DNA until it finds its consensus sequence, where it cleaves and resolves the cruciform DNA. This Bordetella avium (strain 197N) protein is Holliday junction branch migration complex subunit RuvA.